A 118-amino-acid polypeptide reads, in one-letter code: Large ribosomal subunit protein uL24 (118 aa).

The protein belongs to the universal ribosomal protein uL24 family. In terms of assembly, part of the 50S ribosomal subunit.

Its function is as follows. One of two assembly initiator proteins, it binds directly to the 5'-end of the 23S rRNA, where it nucleates assembly of the 50S subunit. In terms of biological role, one of the proteins that surrounds the polypeptide exit tunnel on the outside of the subunit. This Prochlorococcus marinus (strain AS9601) protein is Large ribosomal subunit protein uL24.